The chain runs to 679 residues: Translation initiation factor IF-2 (679 aa).

The 170-residue stretch at 178–347 (KRPPIITVMG…LLTSEMQELK (170 aa)) folds into the tr-type G domain. The segment at 187–194 (GHVDHGKT) is G1. 187–194 (GHVDHGKT) serves as a coordination point for GTP. Residues 212–216 (GITQH) form a G2 region. Positions 233 to 236 (DTPG) are G3. GTP-binding positions include 233–237 (DTPGH) and 287–290 (NKMD). The segment at 287–290 (NKMD) is G4. The segment at 323–325 (SAK) is G5.

Belongs to the TRAFAC class translation factor GTPase superfamily. Classic translation factor GTPase family. IF-2 subfamily.

It localises to the cytoplasm. Functionally, one of the essential components for the initiation of protein synthesis. Protects formylmethionyl-tRNA from spontaneous hydrolysis and promotes its binding to the 30S ribosomal subunits. Also involved in the hydrolysis of GTP during the formation of the 70S ribosomal complex. This chain is Translation initiation factor IF-2, found in Clostridium perfringens (strain ATCC 13124 / DSM 756 / JCM 1290 / NCIMB 6125 / NCTC 8237 / Type A).